The chain runs to 534 residues: Serine/threonine-protein kinase Nek6 (534 aa).

The 254-residue stretch at 4-257 (YEVVEQIGRG…AGELLRHPYL (254 aa)) folds into the Protein kinase domain. Residues 10 to 18 (IGRGAYGSA) and Lys-33 each bind ATP. The active-site Proton acceptor is Asp-129. 2 disordered regions span residues 278-306 (KSNL…SSEA) and 425-449 (KAHT…SSPK).

Belongs to the protein kinase superfamily. NEK Ser/Thr protein kinase family. NIMA subfamily. Interacts with DIS1. In terms of processing, ubiquitinated by the E3 ligase DIS1. Ubiquitination of NEK6 leads to its degradation via the 26S proteasome-dependent pathway. In terms of tissue distribution, expressed in anthers, pistils and leaves.

Its subcellular location is the cytoplasm. The catalysed reaction is L-seryl-[protein] + ATP = O-phospho-L-seryl-[protein] + ADP + H(+). It carries out the reaction L-threonyl-[protein] + ATP = O-phospho-L-threonyl-[protein] + ADP + H(+). May be involved in plant development processes. The protein is Serine/threonine-protein kinase Nek6 of Oryza sativa subsp. japonica (Rice).